The sequence spans 658 residues: MDIATNFITRSLSEIAPNASQSSLHVTPSSVSNNAFGLKLRQLISDTYCPHIFIMASDDTENFMKRKGFDDFASFIRPFGDRIFQSSTNNSAISKETLDSRIFDNDHDSIRFVPMEAVQVPRQWKRNKAWNTENGLENCANSRFAPGGDIDSFRVLSQKLIEEWVQSGSNNYPENGFLNPILDYLKLLLSGNPVAEHETFSHPVGCLIVITSHNTNPMATVMRLFKEINNAPFPNFISKEILHYYLFIHDEDNNDLSNSKQIFQQMRRSLGANSHFIRLRSNYISAKPLDTDRYDTSSIQSLKNAPRDSMESESFCSSSDDAKPITFVTKNLRKFPIPEWRSSLEVQAESEQSCLPLYPLLPVEEVEGMKKFVQTMLYDSIYPFMQRCVRAWEEDLTPQYGNLTTRLLFASKKYWSRNHSSHSQGNYDPLSLIYSSEKQESIKRKMADFSFMLRDYKRAYEIYDEIRNTFSQDKAWNYLASCEEIQIICLLMQNRNISLKSQISYLNKWFDEMVYIYAVRLHSFYYTFRSVLVTSLLLSLKPAFSIDFAASWLAKILEPGPISLNPFETSFLNTTIAGMYSNKEHVGVTDGNRRRKAAFWFAYSAGFWRDCGHCKMAEICWNLANRVYSKSGWESLSEHMLDLKPTLSENFRVKNTFH.

Belongs to the TRS85 family. Part of the multisubunit TRAPP (transport protein particle) complexes I and II.

The protein localises to the golgi apparatus. It localises to the cis-Golgi network. Component of the TRAPP I and TRAPP II complexes. TRAPP I plays a key role in the late stages of endoplasmic reticulum to Golgi traffic. TRAPP II seems to play a role in intra-Golgi transport. Has a role late in meiosis following DNA replication. The chain is Transport protein particle subunit trs85-1 (trs85-1) from Schizosaccharomyces pombe (strain 972 / ATCC 24843) (Fission yeast).